A 517-amino-acid polypeptide reads, in one-letter code: Enantioselective amidase (517 aa).

Active-site charge relay system residues include Lys-96 and Ser-173. Ser-197 acts as the Acyl-ester intermediate in catalysis.

The protein belongs to the amidase family. As to quaternary structure, homooctamer.

It carries out the reaction a monocarboxylic acid amide + H2O = a monocarboxylate + NH4(+). The sequence is that of Enantioselective amidase (amdA) from Rhodococcus rhodochrous.